Consider the following 340-residue polypeptide: Flap endonuclease 1 (340 aa).

The tract at residues 1-98 (MGVPIGEIIP…KELEKRREAR (98 aa)) is N-domain. 7 residues coordinate Mg(2+): aspartate 27, aspartate 80, glutamate 152, glutamate 154, aspartate 173, aspartate 175, and aspartate 236. Residues 116–258 (EARKYAQRAT…KALEIVRHSK (143 aa)) form an I-domain region. The tract at residues 330–338 (KQSTLESWF) is interaction with PCNA.

The protein belongs to the XPG/RAD2 endonuclease family. FEN1 subfamily. As to quaternary structure, interacts with PCNA. PCNA stimulates the nuclease activity without altering cleavage specificity. The cofactor is Mg(2+).

Its function is as follows. Structure-specific nuclease with 5'-flap endonuclease and 5'-3' exonuclease activities involved in DNA replication and repair. During DNA replication, cleaves the 5'-overhanging flap structure that is generated by displacement synthesis when DNA polymerase encounters the 5'-end of a downstream Okazaki fragment. Binds the unpaired 3'-DNA end and kinks the DNA to facilitate 5' cleavage specificity. Cleaves one nucleotide into the double-stranded DNA from the junction in flap DNA, leaving a nick for ligation. Also involved in the base excision repair (BER) pathway. Acts as a genome stabilization factor that prevents flaps from equilibrating into structures that lead to duplications and deletions. Also possesses 5'-3' exonuclease activity on nicked or gapped double-stranded DNA. In Pyrococcus furiosus (strain ATCC 43587 / DSM 3638 / JCM 8422 / Vc1), this protein is Flap endonuclease 1.